The primary structure comprises 148 residues: Phosphopantetheine adenylyltransferase (148 aa).

It belongs to the eukaryotic CoaD family.

The protein resides in the cytoplasm. It carries out the reaction (R)-4'-phosphopantetheine + ATP + H(+) = 3'-dephospho-CoA + diphosphate. The protein operates within cofactor biosynthesis; coenzyme A biosynthesis. Its function is as follows. Reversibly transfers an adenylyl group from ATP to 4'-phosphopantetheine, yielding dephospho-CoA (dPCoA) and pyrophosphate. This Archaeoglobus fulgidus (strain ATCC 49558 / DSM 4304 / JCM 9628 / NBRC 100126 / VC-16) protein is Phosphopantetheine adenylyltransferase.